The sequence spans 99 residues: Large ribosomal subunit protein uL23 (99 aa).

The protein belongs to the universal ribosomal protein uL23 family. As to quaternary structure, part of the 50S ribosomal subunit. Contacts protein L29, and trigger factor when it is bound to the ribosome.

One of the early assembly proteins it binds 23S rRNA. One of the proteins that surrounds the polypeptide exit tunnel on the outside of the ribosome. Forms the main docking site for trigger factor binding to the ribosome. In Rhodopseudomonas palustris (strain BisB5), this protein is Large ribosomal subunit protein uL23.